The sequence spans 230 residues: Orotidine 5'-phosphate decarboxylase (230 aa).

Substrate contacts are provided by residues Asp-10, Lys-31, 58–67 (DLKLHDIPNT), Thr-117, Arg-179, Gln-188, Gly-208, and Arg-209. Catalysis depends on Lys-60, which acts as the Proton donor.

The protein belongs to the OMP decarboxylase family. Type 1 subfamily. As to quaternary structure, homodimer.

It catalyses the reaction orotidine 5'-phosphate + H(+) = UMP + CO2. It participates in pyrimidine metabolism; UMP biosynthesis via de novo pathway; UMP from orotate: step 2/2. In terms of biological role, catalyzes the decarboxylation of orotidine 5'-monophosphate (OMP) to uridine 5'-monophosphate (UMP). This Staphylococcus aureus (strain USA300) protein is Orotidine 5'-phosphate decarboxylase.